The following is a 341-amino-acid chain: Phosphate acyltransferase (341 aa).

Belongs to the PlsX family. Homodimer. Probably interacts with PlsY.

The protein localises to the cytoplasm. The catalysed reaction is a fatty acyl-[ACP] + phosphate = an acyl phosphate + holo-[ACP]. The protein operates within lipid metabolism; phospholipid metabolism. Functionally, catalyzes the reversible formation of acyl-phosphate (acyl-PO(4)) from acyl-[acyl-carrier-protein] (acyl-ACP). This enzyme utilizes acyl-ACP as fatty acyl donor, but not acyl-CoA. The polypeptide is Phosphate acyltransferase (Saccharophagus degradans (strain 2-40 / ATCC 43961 / DSM 17024)).